The chain runs to 169 residues: TPD1 protein homolog 1B (169 aa).

An N-terminal signal peptide occupies residues 1–25; the sequence is MADCTTMRLASSVTIILLLLVASQA.

Expressed in roots, and at low levels in anthers during meiosis.

Its function is as follows. May play a role during anther development. The polypeptide is TPD1 protein homolog 1B (Oryza sativa subsp. japonica (Rice)).